The sequence spans 741 residues: Zinc finger and BTB domain-containing protein 20 (741 aa).

A compositionally biased stretch (basic and acidic residues) spans 1–17 (MLERKKPKTAENQKASE). Residues 1-28 (MLERKKPKTAENQKASEENEITQPGGSS) form a disordered region. Residues 104-167 (CDVTVRIHGS…MYSGVLRVSQ (64 aa)) enclose the BTB domain. The disordered stretch occupies residues 203–235 (GIQDSGQDTPRGTPESGTSGQSSDTESGYLQSH). The span at 206-235 (DSGQDTPRGTPESGTSGQSSDTESGYLQSH) shows a compositional bias: polar residues. Residue threonine 211 is modified to Phosphothreonine. Lysine 330 participates in a covalent cross-link: Glycyl lysine isopeptide (Lys-Gly) (interchain with G-Cter in SUMO1); alternate. A Glycyl lysine isopeptide (Lys-Gly) (interchain with G-Cter in SUMO2); alternate cross-link involves residue lysine 330. The tract at residues 350–440 (RNESEECTED…SSPERSNESE (91 aa)) is disordered. Phosphoserine is present on serine 353. A compositionally biased stretch (acidic residues) spans 354–367 (EECTEDTDQAEGTE). Threonine 357 carries the post-translational modification Phosphothreonine. Lysine 371 is covalently cross-linked (Glycyl lysine isopeptide (Lys-Gly) (interchain with G-Cter in SUMO2)). Residues 404–423 (AEPAQPEQAAEAPAESSAQP) are compositionally biased toward low complexity. C2H2-type zinc fingers lie at residues 578 to 600 (YECT…MFVH), 606 to 628 (HQCS…MVTH), 634 to 656 (YQCS…MRLH), and 662 to 684 (YECY…VALH). Residues threonine 690 and threonine 695 each carry the phosphothreonine modification. The C2H2-type 5 zinc finger occupies 715-737 (YVCSVCPAKFDQIEQFNDHMRMH). Lysine 723 is covalently cross-linked (Glycyl lysine isopeptide (Lys-Gly) (interchain with G-Cter in SUMO2)).

In terms of assembly, can homodimerize. Binds to DNA. Sumoylated with SUMO1. In terms of tissue distribution, specifically expressed in early hippocampal neurons, cerebellar granule cells and gliogenic progenitors as well as in differentiated glia. Expressed in adult and aged myogenic satellite cells.

The protein localises to the nucleus. May be a transcription factor that may be involved in hematopoiesis, oncogenesis, and immune responses. Plays a role in postnatal myogenesis, may be involved in the regulation of satellite cells self-renewal. The protein is Zinc finger and BTB domain-containing protein 20 (Zbtb20) of Mus musculus (Mouse).